Reading from the N-terminus, the 92-residue chain is Small ribosomal subunit protein uS19 (92 aa).

It belongs to the universal ribosomal protein uS19 family.

Its function is as follows. Protein S19 forms a complex with S13 that binds strongly to the 16S ribosomal RNA. The chain is Small ribosomal subunit protein uS19 from Rhodospirillum centenum (strain ATCC 51521 / SW).